The primary structure comprises 284 residues: Pantothenate synthetase (284 aa).

30–37 is an ATP binding site; that stretch reads MGALHNGH. His-37 (proton donor) is an active-site residue. Gln-61 lines the (R)-pantoate pocket. Gln-61 serves as a coordination point for beta-alanine. Position 147-150 (147-150) interacts with ATP; sequence GEKD. Gln-153 serves as a coordination point for (R)-pantoate. Residues Leu-176 and 184–187 each bind ATP; that span reads SSSR.

The protein belongs to the pantothenate synthetase family. In terms of assembly, homodimer.

It localises to the cytoplasm. It carries out the reaction (R)-pantoate + beta-alanine + ATP = (R)-pantothenate + AMP + diphosphate + H(+). Its pathway is cofactor biosynthesis; (R)-pantothenate biosynthesis; (R)-pantothenate from (R)-pantoate and beta-alanine: step 1/1. Functionally, catalyzes the condensation of pantoate with beta-alanine in an ATP-dependent reaction via a pantoyl-adenylate intermediate. The polypeptide is Pantothenate synthetase (Bartonella henselae (strain ATCC 49882 / DSM 28221 / CCUG 30454 / Houston 1) (Rochalimaea henselae)).